Here is a 342-residue protein sequence, read N- to C-terminus: 4-amino-5-hydroxymethyl-2-methylpyrimidine phosphate synthase (342 aa).

Lysine 62 is modified (N6-(pyridoxal phosphate)lysine). The active site involves histidine 66. Glycine 115–glycine 118 provides a ligand contact to pyridoxal 5'-phosphate. The short motif at cysteine 195–cysteine 199 is the CCCFC; essential for catalytic activity, may be the site of iron coordination element.

The protein belongs to the NMT1/THI5 family. Homodimer. Fe cation serves as cofactor.

It carries out the reaction N(6)-(pyridoxal phosphate)-L-lysyl-[4-amino-5-hydroxymethyl-2-methylpyrimidine phosphate synthase] + L-histidyl-[4-amino-5-hydroxymethyl-2-methylpyrimidine phosphate synthase] + 2 Fe(3+) + 4 H2O = L-lysyl-[4-amino-5-hydroxymethyl-2-methylpyrimidine phosphate synthase] + (2S)-2-amino-5-hydroxy-4-oxopentanoyl-[4-amino-5-hydroxymethyl-2-methylpyrimidine phosphate synthase] + 4-amino-2-methyl-5-(phosphooxymethyl)pyrimidine + 3-oxopropanoate + 2 Fe(2+) + 2 H(+). It functions in the pathway cofactor biosynthesis; thiamine diphosphate biosynthesis. Responsible for the formation of the pyrimidine heterocycle in the thiamine biosynthesis pathway. Catalyzes the formation of hydroxymethylpyrimidine phosphate (HMP-P) from histidine and pyridoxal phosphate (PLP). The protein uses PLP and the active site histidine to form HMP-P, generating an inactive enzyme. The enzyme can only undergo a single turnover, which suggests it is a suicide enzyme. This chain is 4-amino-5-hydroxymethyl-2-methylpyrimidine phosphate synthase, found in Aspergillus parasiticus.